A 295-amino-acid polypeptide reads, in one-letter code: HTH-type transcriptional regulator TrpI (295 aa).

The 58-residue stretch at 6–63 (PSLNALRAFEAAARLHSISLAAEELHVTHGAVSRQVRLLEDDLGVALFGKDGRGVKLT) folds into the HTH lysR-type domain. The H-T-H motif DNA-binding region spans 23–42 (ISLAAEELHVTHGAVSRQVR).

Belongs to the LysR transcriptional regulatory family. Homotetramer.

In terms of biological role, activates the expression of the trpBA genes, which encode the two tryptophan synthase subunits, and represses initiation at its own promoter. Acts by binding to two adjacent sites in the intergenic region. In the absence of the inducer indoleglycerol phosphate (InGP), TrpI binds to site I. In the presence of InGP, TrpI binds to site I and site II. Binding to site II is site I dependent. InGP strongly stimulates binding to site II and is required for maximal activation of trpBA. The sequence is that of HTH-type transcriptional regulator TrpI from Pseudomonas aeruginosa (strain ATCC 15692 / DSM 22644 / CIP 104116 / JCM 14847 / LMG 12228 / 1C / PRS 101 / PAO1).